The following is a 172-amino-acid chain: 3-hydroxydecanoyl-[acyl-carrier-protein] dehydratase (172 aa).

The active site involves His71.

The protein belongs to the thioester dehydratase family. FabA subfamily. In terms of assembly, homodimer.

It localises to the cytoplasm. The catalysed reaction is a (3R)-hydroxyacyl-[ACP] = a (2E)-enoyl-[ACP] + H2O. It catalyses the reaction (3R)-hydroxydecanoyl-[ACP] = (2E)-decenoyl-[ACP] + H2O. The enzyme catalyses (2E)-decenoyl-[ACP] = (3Z)-decenoyl-[ACP]. It functions in the pathway lipid metabolism; fatty acid biosynthesis. Its function is as follows. Necessary for the introduction of cis unsaturation into fatty acids. Catalyzes the dehydration of (3R)-3-hydroxydecanoyl-ACP to E-(2)-decenoyl-ACP and then its isomerization to Z-(3)-decenoyl-ACP. Can catalyze the dehydratase reaction for beta-hydroxyacyl-ACPs with saturated chain lengths up to 16:0, being most active on intermediate chain length. The protein is 3-hydroxydecanoyl-[acyl-carrier-protein] dehydratase of Escherichia coli (strain SE11).